A 498-amino-acid polypeptide reads, in one-letter code: Tumor necrosis factor receptor superfamily member 8 (498 aa).

An N-terminal signal peptide occupies residues 1 to 18 (MSALLTAAGLLFLGMLQA). Topologically, residues 19–287 (FPTDRPLKTT…STGTPFLDPG (269 aa)) are extracellular. 2 TNFR-Cys repeats span residues 68–105 (QCAP…PRIC) and 106–146 (ECQP…DTIC). 5 cysteine pairs are disulfide-bonded: Cys-69-Cys-81, Cys-84-Cys-97, Cys-87-Cys-105, Cys-107-Cys-121, and Cys-128-Cys-146. Residues 142-168 (KDTICELPSSGSGPNCSNPGDRKTLTS) are disordered. The segment covering 149–160 (PSSGSGPNCSNP) has biased composition (low complexity). Residues Asn-156, Asn-183, and Asn-229 are each glycosylated (N-linked (GlcNAc...) asparagine). Positions 204–256 (ELVKVPESSSSKAREPSPDPGNAEKNMTLELPSPGTLPDISTSENSKEPASTA) are disordered. The span at 242–256 (DISTSENSKEPASTA) shows a compositional bias: polar residues. The chain crosses the membrane as a helical span at residues 288–308 (PVLFWVAMVVLLVGSGSFLLC). Topologically, residues 309-498 (YWKACRRRFQ…DHGPTTVSEK (190 aa)) are cytoplasmic. Residues 338–358 (DSCPTEKLTQPQRSGSVTDPS) are compositionally biased toward polar residues. Disordered regions lie at residues 338 to 370 (DSCP…SPPP), 389 to 411 (LDDS…VSTE), and 436 to 498 (EVPE…VSEK). Residues Ser-339 and Ser-353 each carry the phosphoserine modification. 3 stretches are compositionally biased toward basic and acidic residues: residues 402-411 (EPPEPRVSTE), 456-465 (EVDHAPHYPE), and 484-498 (EGGK…VSEK).

The protein belongs to the TNFR8 family. Interacts with TRAF1, TRAF2, TRAF3 and TRAF5. As to expression, detected in thymus and in activated splenocytes.

The protein resides in the cell membrane. Its function is as follows. Receptor for TNFSF8/CD30L. May play a role in the regulation of cellular growth and transformation of activated lymphoblasts. Regulates gene expression through activation of NF-kappa-B. The chain is Tumor necrosis factor receptor superfamily member 8 from Mus musculus (Mouse).